The primary structure comprises 319 residues: Probable ABC transporter permease protein MG189 homolog (319 aa).

Transmembrane regions (helical) follow at residues 41 to 61 (VVLC…LVVA), 98 to 118 (AIWI…FFTV), 134 to 154 (LFWF…LIGQ), 169 to 189 (PAII…GFMF), 229 to 249 (TVSI…LLLL), and 282 to 302 (NLKM…YFLF). Positions 99-302 (IWINSLVTIL…LPMFIVYFLF (204 aa)) constitute an ABC transmembrane type-1 domain.

Belongs to the binding-protein-dependent transport system permease family. MalFG subfamily.

It is found in the cell membrane. Its function is as follows. Probably part of a binding-protein-dependent transport system. Probably responsible for the translocation of the substrate across the membrane. This is Probable ABC transporter permease protein MG189 homolog from Mycoplasma pneumoniae (strain ATCC 29342 / M129 / Subtype 1) (Mycoplasmoides pneumoniae).